A 655-amino-acid polypeptide reads, in one-letter code: p-hydroxybenzoic acid efflux pump subunit AaeB (655 aa).

The Periplasmic portion of the chain corresponds to 1–12 (MGIFSIANQHIR). Residues 13-33 (FAVKLACAIVLALFIGFHFQL) form a helical membrane-spanning segment. At 34-37 (ETPR) the chain is on the cytoplasmic side. The helical transmembrane segment at 38-58 (WAVLTAAIVAAGPAFAAGGEP) threads the bilayer. The Periplasmic segment spans residues 59 to 68 (YSGAIRYRGM). A helical membrane pass occupies residues 69–89 (LRIIGTFIGCIAALIIIISMI). Residues 90 to 92 (RAP) lie on the Cytoplasmic side of the membrane. The chain crosses the membrane as a helical span at residues 93 to 113 (LLMILVCCVWVGFCTWISSLV). Over 114 to 120 (RIENSYA) the chain is Periplasmic. A helical membrane pass occupies residues 121 to 141 (WGLSGYTALIIVITIQTEPLL). At 142–151 (TPQFALERCS) the chain is on the cytoplasmic side. Residues 152–172 (EIVIGIGCAILADLLFSPRSI) form a helical membrane-spanning segment. The Periplasmic segment spans residues 173 to 369 (KQEVDRELDS…RTTLSCILGT (197 aa)). A helical transmembrane segment spans residues 370–390 (LFWLWTGWTSGNGEMVMIAVV). Topologically, residues 391–406 (TSLAMRLPNPRMVCID) are cytoplasmic. The chain crosses the membrane as a helical span at residues 407-427 (FIYGTLAALPLGLLYFLVIIP). The Periplasmic portion of the chain corresponds to 428-430 (NTQ). The helical transmembrane segment at 431–451 (QSMLLLCLSLAVLGFFIGIEV) threads the bilayer. At 452–458 (QKRRLGS) the chain is on the cytoplasmic side. A helical transmembrane segment spans residues 459–479 (MGALASTINIIVLDNPMTFHF). Residues 480 to 481 (SQ) are Periplasmic-facing. A helical membrane pass occupies residues 482 to 502 (FLDSALGQIVGCMLAFIVILL). Over 503–655 (VRDKSKDRTG…HKYQNALTDS (153 aa)) the chain is Cytoplasmic.

The protein belongs to the aromatic acid exporter ArAE (TC 2.A.85) family.

Its subcellular location is the cell inner membrane. Forms an efflux pump with AaeA. Could function as a metabolic relief valve, allowing to eliminate certain compounds when they accumulate to high levels in the cell. This is p-hydroxybenzoic acid efflux pump subunit AaeB from Salmonella paratyphi A (strain ATCC 9150 / SARB42).